We begin with the raw amino-acid sequence, 192 residues long: MVSKPRNEWSTALSHLVLAGVSLHAAVSSVQSSRGAAAGFLLQTLAAVIMLAPELNTHEDCLAGAWVATVIGLPLLAFDFHWVNGDRSSANLLLGGGMVLAVAGDHLGPEGCSVAGQAVLLVVAVTILIVAVFTANTYGMWGGAMLGVAGLLSRLEEDRLLLLPKEDVCRWALAAGSWAYCRALHTQRLQWE.

A signal peptide spans 1–32 (MVSKPRNEWSTALSHLVLAGVSLHAAVSSVQS). Transmembrane regions (helical) follow at residues 35 to 55 (GAAA…APEL), 63 to 83 (AGAW…FHWV), 92 to 112 (LLLG…PEGC), and 114 to 134 (VAGQ…AVFT).

The protein resides in the membrane. The protein is Transmembrane protein 276 of Rattus norvegicus (Rat).